The chain runs to 329 residues: Ketol-acid reductoisomerase (NADP(+)) (329 aa).

Residues 2–182 enclose the KARI N-terminal Rossmann domain; that stretch reads VEIYYDDDAS…GGTRAGALRT (181 aa). Residues 25–28, serine 51, and serine 53 contribute to the NADP(+) site; that span reads YGSQ. The active site involves histidine 108. Glycine 134 lines the NADP(+) pocket. Positions 183–328 constitute a KARI C-terminal knotted domain; the sequence is TFTEETETDL…AKLRPMMSWI (146 aa). Residues aspartate 191, glutamate 195, glutamate 227, and glutamate 231 each contribute to the Mg(2+) site. Serine 252 contributes to the substrate binding site.

This sequence belongs to the ketol-acid reductoisomerase family. Mg(2+) serves as cofactor.

It catalyses the reaction (2R)-2,3-dihydroxy-3-methylbutanoate + NADP(+) = (2S)-2-acetolactate + NADPH + H(+). The enzyme catalyses (2R,3R)-2,3-dihydroxy-3-methylpentanoate + NADP(+) = (S)-2-ethyl-2-hydroxy-3-oxobutanoate + NADPH + H(+). It participates in amino-acid biosynthesis; L-isoleucine biosynthesis; L-isoleucine from 2-oxobutanoate: step 2/4. It functions in the pathway amino-acid biosynthesis; L-valine biosynthesis; L-valine from pyruvate: step 2/4. In terms of biological role, involved in the biosynthesis of branched-chain amino acids (BCAA). Catalyzes an alkyl-migration followed by a ketol-acid reduction of (S)-2-acetolactate (S2AL) to yield (R)-2,3-dihydroxy-isovalerate. In the isomerase reaction, S2AL is rearranged via a Mg-dependent methyl migration to produce 3-hydroxy-3-methyl-2-ketobutyrate (HMKB). In the reductase reaction, this 2-ketoacid undergoes a metal-dependent reduction by NADPH to yield (R)-2,3-dihydroxy-isovalerate. This Frankia casuarinae (strain DSM 45818 / CECT 9043 / HFP020203 / CcI3) protein is Ketol-acid reductoisomerase (NADP(+)).